A 369-amino-acid polypeptide reads, in one-letter code: Homoserine O-acetyltransferase (369 aa).

Positions 44–350 (NAILVAHAWT…AYGHDAFLLE (307 aa)) constitute an AB hydrolase-1 domain. The active-site Nucleophile is the S150. R217 is a binding site for substrate. Residues D311 and H344 contribute to the active site. D345 contacts substrate.

Belongs to the AB hydrolase superfamily. MetX family. In terms of assembly, homodimer.

The protein resides in the cytoplasm. It catalyses the reaction L-homoserine + acetyl-CoA = O-acetyl-L-homoserine + CoA. It functions in the pathway amino-acid biosynthesis; L-methionine biosynthesis via de novo pathway; O-acetyl-L-homoserine from L-homoserine: step 1/1. In terms of biological role, transfers an acetyl group from acetyl-CoA to L-homoserine, forming acetyl-L-homoserine. In Geobacter metallireducens (strain ATCC 53774 / DSM 7210 / GS-15), this protein is Homoserine O-acetyltransferase.